The sequence spans 158 residues: Snaclec coagulation factor X-activating enzyme light chain 2 (158 aa).

The signal sequence occupies residues 1–23 (MGRSISVSFGLLAVFLSLSGTGA). Cystine bridges form between Cys27/Cys38, Cys55/Cys152, and Cys127/Cys144. In terms of domain architecture, C-type lectin spans 34–153 (YRYFCYRVFK…CEEPYPFVCK (120 aa)).

Belongs to the snaclec family. Heterotrimer; disulfide-linked. The heterotrimer consists of 1 heavy chain (a metalloproteinase) and 2 light chains: LC1 and LC2. In terms of tissue distribution, expressed by the venom gland.

The protein resides in the secreted. Functionally, regulatory subunit of the blood coagulation factor X-activating enzyme. Activates coagulation factor X (F10) by cleaving the Arg-Ile bond at position 234, activates coagulation factor IX (F9) by cleaving the Arg-Val bond at position 226 and is also able to activate protein C (PROC). May serve as an exosite by which the enzyme recognizes and binds to the Gla domain of factor X (F10) in a calcium-dependent manner. This is Snaclec coagulation factor X-activating enzyme light chain 2 (LC2) from Macrovipera lebetinus (Levantine viper).